Consider the following 150-residue polypeptide: Galectin-1 (150 aa).

A Galectin domain is found at 9–141 (NQIKLQDDFK…FSSPVTVDIH (133 aa)). Positions 51, 55, 64, and 75 each coordinate a carbohydrate.

As to quaternary structure, homotetramer. Oligomerization is required for carbohydrate binding. Most abundant in fruiting bodies. Very low levels of expression in asexual vegetative mycelia.

It localises to the secreted. The protein localises to the extracellular space. The protein resides in the extracellular matrix. Its subcellular location is the cell wall. It is found in the endomembrane system. Functionally, binds lactose. May play a role in fruiting body formation. The chain is Galectin-1 (Cgl1) from Coprinopsis cinerea (strain Okayama-7 / 130 / ATCC MYA-4618 / FGSC 9003) (Inky cap fungus).